A 543-amino-acid chain; its full sequence is Kelch repeat and BTB domain-containing protein 4 (543 aa).

The BTB domain maps to 70–137 (ADVTISVEGR…IYHGTVKLRA (68 aa)). The 93-residue stretch at 172 to 264 (CLQVMWLADR…SLKEIGENVH (93 aa)) folds into the BACK domain. Kelch repeat units follow at residues 264–310 (HIYL…KHGG), 311–353 (DLYV…SVPG), 356–403 (AIYS…NLNG), 405–455 (IYLL…VHKD), and 457–505 (VFIV…YVFR).

Component of the BCR(KBTBD4) E3 ubiquitin ligase complex, at least composed of CUL3, KBTBD4 and RBX1.

Its function is as follows. Substrate-specific adapter of a BCR (BTB-CUL3-RBX1) E3 ubiquitin ligase complex which targets CoREST corepressor complex components RCOR1, KDM1A/LSD1 and HDAC2 for proteasomal degradation. RCOR1 is likely to be the primary target while degradation of KDM1A and HDAC2 is likely due to their association with RCOR1. Also targets RCOR3, MIER2 and MIER3 for proteasomal degradation as well as associated proteins ZNF217 and RREB1. Degradation is dependent on the presence of an ELM2 domain in the target proteins. The chain is Kelch repeat and BTB domain-containing protein 4 (KBTBD4) from Macaca fascicularis (Crab-eating macaque).